An 825-amino-acid chain; its full sequence is Glycerol-3-phosphate acyltransferase (825 aa).

The HXXXXD motif motif lies at 306 to 311 (CHRSHM). Residues 802–825 (SASSSTEMEASTSSSQTAEETTQG) form a disordered region.

This sequence belongs to the GPAT/DAPAT family.

The protein localises to the cell inner membrane. The catalysed reaction is sn-glycerol 3-phosphate + an acyl-CoA = a 1-acyl-sn-glycero-3-phosphate + CoA. The protein operates within phospholipid metabolism; CDP-diacylglycerol biosynthesis; CDP-diacylglycerol from sn-glycerol 3-phosphate: step 1/3. The sequence is that of Glycerol-3-phosphate acyltransferase from Pectobacterium atrosepticum (strain SCRI 1043 / ATCC BAA-672) (Erwinia carotovora subsp. atroseptica).